Consider the following 595-residue polypeptide: L-fucose isomerase (595 aa).

Active-site proton acceptor residues include Glu-341 and Asp-365. Mn(2+) is bound by residues Glu-341, Asp-365, and His-531.

This sequence belongs to the L-fucose isomerase family. Mn(2+) is required as a cofactor.

It is found in the cytoplasm. It catalyses the reaction L-fucose = L-fuculose. Its pathway is carbohydrate degradation; L-fucose degradation; L-lactaldehyde and glycerone phosphate from L-fucose: step 1/3. Functionally, converts the aldose L-fucose into the corresponding ketose L-fuculose. The sequence is that of L-fucose isomerase from Clostridium perfringens (strain 13 / Type A).